A 264-amino-acid polypeptide reads, in one-letter code: MVYIIIVSHGHEDYIKKLLENLNADDEHYKIIVRDNKDSLLLKQICQHYAGLDYISGGVYGFGHNNNIAVAYVKEKYRPADDDYILFLNPDIIMKHDDLLTYIKYVESKRYAFSTLCLFRDEAKSLHDYSVRKFPVLSDFIVSFMLGINKTKIPKESIYSDTVVDWCAGSFMLVRFSDFVRVNGFDQGYFMYCEDIDLCLRLSLAGVRLHYVPAFHAIHYAHHDNRSFFSKAFRWHLKSTFRYLARKRILSNRNFDRISSVFHP.

It belongs to the glycosyltransferase 2 family.

Its pathway is bacterial outer membrane biogenesis; lipopolysaccharide biosynthesis. Functionally, rhamnosyltransferase involved in lipopolysaccharide biosynthesis. The chain is Rhamnosyltransferase WbbL (wbbL) from Escherichia coli (strain K12).